Reading from the N-terminus, the 505-residue chain is Deoxyguanosinetriphosphate triphosphohydrolase (505 aa).

In terms of domain architecture, HD spans 66–273 (RLTHSMEVQQ…MEAADDISYC (208 aa)).

This sequence belongs to the dGTPase family. Type 1 subfamily. As to quaternary structure, homotetramer. It depends on Mg(2+) as a cofactor.

The catalysed reaction is dGTP + H2O = 2'-deoxyguanosine + triphosphate + H(+). DGTPase preferentially hydrolyzes dGTP over the other canonical NTPs. The polypeptide is Deoxyguanosinetriphosphate triphosphohydrolase (Escherichia fergusonii (strain ATCC 35469 / DSM 13698 / CCUG 18766 / IAM 14443 / JCM 21226 / LMG 7866 / NBRC 102419 / NCTC 12128 / CDC 0568-73)).